The following is a 218-amino-acid chain: Protein THO1 (218 aa).

In terms of domain architecture, SAP spans 4-38; it reads YSSLTVVQLKDLLTKRNLSVGGLKNELVQRLIKDD. Phosphoserine is present on Ser22. Disordered stretches follow at residues 37 to 123 and 177 to 218; these read DDEE…LSPE and LVSR…GYRR. Positions 47-57 are enriched in polar residues; it reads VSPQEQNQEQG. Phosphoserine occurs at positions 58 and 68. A compositionally biased stretch (basic and acidic residues) spans 72 to 96; sequence TEKKEVSSEPKETNEPKEENKDVQK. Composition is skewed to low complexity over residues 102–122 and 186–203; these read SATA…ALSP and SGNN…NNRS. Residues 204–218 are compositionally biased toward basic residues; sequence RVSKNRRGNRSGYRR.

It belongs to the SAP domain-containing ribonucleoprotein family. In terms of assembly, interacts with SUB2 in the presence of RNA; this interaction facilitates RNA binding of SUB2.

Functionally, facilitates RNA binding of SUB2 and likely plays a role in mRNA export. Suppressor of the transcriptional defect of HPR1 by overexpression. This chain is Protein THO1 (THO1), found in Saccharomyces cerevisiae (strain ATCC 204508 / S288c) (Baker's yeast).